We begin with the raw amino-acid sequence, 496 residues long: Probable cytosol aminopeptidase (496 aa).

Lysine 257 and aspartate 262 together coordinate Mn(2+). Residue lysine 269 is part of the active site. Aspartate 281, aspartate 341, and glutamate 343 together coordinate Mn(2+). Residue arginine 345 is part of the active site.

The protein belongs to the peptidase M17 family. Requires Mn(2+) as cofactor.

It localises to the cytoplasm. The catalysed reaction is Release of an N-terminal amino acid, Xaa-|-Yaa-, in which Xaa is preferably Leu, but may be other amino acids including Pro although not Arg or Lys, and Yaa may be Pro. Amino acid amides and methyl esters are also readily hydrolyzed, but rates on arylamides are exceedingly low.. The enzyme catalyses Release of an N-terminal amino acid, preferentially leucine, but not glutamic or aspartic acids.. Its function is as follows. Presumably involved in the processing and regular turnover of intracellular proteins. Catalyzes the removal of unsubstituted N-terminal amino acids from various peptides. This Synechococcus sp. (strain CC9311) protein is Probable cytosol aminopeptidase.